The primary structure comprises 180 residues: MIKDSEFYRLDGVPITKEEIRAISVEKLNICPEDIILDIGCGSGGMTVEISKRCKFVYAVDGSKDAIDTTLKNMDKFNVKNCEVYFGDAKDLISNFKVNKAFIGGTQNIESVIEKLNEKNVRNIVINTIVLENSVKVIQILERLNFSIEVISVLISYGKRISSGHMMLSKNPITIITAKK.

S-adenosyl-L-methionine is bound by residues Thr16, 40–44 (GCGSG), Asp61, and Ala89.

Belongs to the methyltransferase superfamily. Archaeal-type CbiT family.

The enzyme catalyses Co-precorrin-6B + S-adenosyl-L-methionine = Co-precorrin-7 + S-adenosyl-L-homocysteine + CO2. It participates in cofactor biosynthesis; adenosylcobalamin biosynthesis; cob(II)yrinate a,c-diamide from sirohydrochlorin (anaerobic route): step 8/10. Its function is as follows. Catalyzes the methylation of C-15 in cobalt-precorrin-6B followed by the decarboxylation of C-12 to form cobalt-precorrin-7. The protein is Probable cobalt-precorrin-6B C(15)-methyltransferase (decarboxylating) of Methanococcus vannielii (strain ATCC 35089 / DSM 1224 / JCM 13029 / OCM 148 / SB).